We begin with the raw amino-acid sequence, 316 residues long: HPr kinase/phosphorylase (316 aa).

Catalysis depends on residues H143 and K164. 158-165 (GEAGSGKS) is an ATP binding site. S165 provides a ligand contact to Mg(2+). D182 functions as the Proton acceptor; for phosphorylation activity. Proton donor; for dephosphorylation activity in the catalytic mechanism. The segment at 206–215 (LEVRGLGVLN) is important for the catalytic mechanism of both phosphorylation and dephosphorylation. E207 contributes to the Mg(2+) binding site. R251 is a catalytic residue. The segment at 272 to 277 (PVMPGR) is important for the catalytic mechanism of dephosphorylation.

This sequence belongs to the HPrK/P family. Homohexamer. Mg(2+) serves as cofactor.

It catalyses the reaction [HPr protein]-L-serine + ATP = [HPr protein]-O-phospho-L-serine + ADP + H(+). The enzyme catalyses [HPr protein]-O-phospho-L-serine + phosphate + H(+) = [HPr protein]-L-serine + diphosphate. Its function is as follows. Catalyzes the ATP- as well as the pyrophosphate-dependent phosphorylation of a specific serine residue in HPr, a phosphocarrier protein of the phosphoenolpyruvate-dependent sugar phosphotransferase system (PTS). HprK/P also catalyzes the pyrophosphate-producing, inorganic phosphate-dependent dephosphorylation (phosphorolysis) of seryl-phosphorylated HPr (P-Ser-HPr). This chain is HPr kinase/phosphorylase, found in Xanthomonas campestris pv. campestris (strain 8004).